A 179-amino-acid chain; its full sequence is ADP-ribose 1''-phosphate phosphatase (179 aa).

Residues 1–179 (MSNIHYIKGN…RSMNFTVYEL (179 aa)) enclose the Macro domain. Residues 9-11 (GNI), 24-26 (SCN), 31-36 (WGGGIA), and 149-155 (INSGIFG) each bind substrate.

It belongs to the POA1 family.

The enzyme catalyses ADP-alpha-D-ribose 1''-phosphate + H2O = ADP-D-ribose + phosphate. Functionally, highly specific phosphatase involved in the metabolism of ADP-ribose 1''-phosphate (Appr1p) which is produced as a consequence of tRNA splicing. The chain is ADP-ribose 1''-phosphate phosphatase (POA1) from Candida glabrata (strain ATCC 2001 / BCRC 20586 / JCM 3761 / NBRC 0622 / NRRL Y-65 / CBS 138) (Yeast).